The chain runs to 197 residues: Imidazoleglycerol-phosphate dehydratase (197 aa).

It belongs to the imidazoleglycerol-phosphate dehydratase family.

It localises to the cytoplasm. The enzyme catalyses D-erythro-1-(imidazol-4-yl)glycerol 3-phosphate = 3-(imidazol-4-yl)-2-oxopropyl phosphate + H2O. It participates in amino-acid biosynthesis; L-histidine biosynthesis; L-histidine from 5-phospho-alpha-D-ribose 1-diphosphate: step 6/9. This is Imidazoleglycerol-phosphate dehydratase from Methanocaldococcus jannaschii (strain ATCC 43067 / DSM 2661 / JAL-1 / JCM 10045 / NBRC 100440) (Methanococcus jannaschii).